The sequence spans 428 residues: Tryptophan synthase beta chain (428 aa).

The residue at position 92 (K92) is an N6-(pyridoxal phosphate)lysine.

It belongs to the TrpB family. Tetramer of two alpha and two beta chains. Pyridoxal 5'-phosphate serves as cofactor.

The catalysed reaction is (1S,2R)-1-C-(indol-3-yl)glycerol 3-phosphate + L-serine = D-glyceraldehyde 3-phosphate + L-tryptophan + H2O. It participates in amino-acid biosynthesis; L-tryptophan biosynthesis; L-tryptophan from chorismate: step 5/5. Its function is as follows. The beta subunit is responsible for the synthesis of L-tryptophan from indole and L-serine. The protein is Tryptophan synthase beta chain of Leptothrix cholodnii (strain ATCC 51168 / LMG 8142 / SP-6) (Leptothrix discophora (strain SP-6)).